A 529-amino-acid chain; its full sequence is Non-reducing end alpha-L-arabinofuranosidase BoGH43B (529 aa).

The first 23 residues, methionine 1–alanine 23, serve as a signal peptide directing secretion. Aspartate 38 (proton acceptor) is an active-site residue. The active-site Proton donor is glutamate 198.

The protein belongs to the glycosyl hydrolase 43 family.

The protein localises to the periplasm. The catalysed reaction is Hydrolysis of terminal non-reducing alpha-L-arabinofuranoside residues in alpha-L-arabinosides.. The protein operates within glucan metabolism; xyloglucan degradation. Its function is as follows. Alpha-L-arabinofuranosidase involved in xyloglucan degradation by mediating the cleavage of terminal non-reducing alpha-L-arabinofuranoside residues in xyloglucan branches, converting the 'S' units to 'X' units. The polypeptide is Non-reducing end alpha-L-arabinofuranosidase BoGH43B (Bacteroides ovatus (strain ATCC 8483 / DSM 1896 / JCM 5824 / BCRC 10623 / CCUG 4943 / NCTC 11153)).